A 245-amino-acid polypeptide reads, in one-letter code: Ubiquinone/menaquinone biosynthesis C-methyltransferase UbiE (245 aa).

Residues Thr-71, Asp-92, and 118–119 (DA) each bind S-adenosyl-L-methionine.

Belongs to the class I-like SAM-binding methyltransferase superfamily. MenG/UbiE family.

The enzyme catalyses a 2-demethylmenaquinol + S-adenosyl-L-methionine = a menaquinol + S-adenosyl-L-homocysteine + H(+). It catalyses the reaction a 2-methoxy-6-(all-trans-polyprenyl)benzene-1,4-diol + S-adenosyl-L-methionine = a 5-methoxy-2-methyl-3-(all-trans-polyprenyl)benzene-1,4-diol + S-adenosyl-L-homocysteine + H(+). Its pathway is quinol/quinone metabolism; menaquinone biosynthesis; menaquinol from 1,4-dihydroxy-2-naphthoate: step 2/2. The protein operates within cofactor biosynthesis; ubiquinone biosynthesis. In terms of biological role, methyltransferase required for the conversion of demethylmenaquinol (DMKH2) to menaquinol (MKH2) and the conversion of 2-polyprenyl-6-methoxy-1,4-benzoquinol (DDMQH2) to 2-polyprenyl-3-methyl-6-methoxy-1,4-benzoquinol (DMQH2). This Neisseria meningitidis serogroup A / serotype 4A (strain DSM 15465 / Z2491) protein is Ubiquinone/menaquinone biosynthesis C-methyltransferase UbiE.